The sequence spans 733 residues: FYVE, RhoGEF and PH domain-containing protein 3 (733 aa).

Composition is skewed to polar residues over residues 1-11 (MELGRSSSTPQ), 47-60 (HSSS…STRE), and 106-117 (ETASDSRVPQDN). A disordered region spans residues 1–134 (MELGRSSSTP…GVGEEPDPKV (134 aa)). Residues 118–129 (PQEEEDSGVGEE) show a composition bias toward acidic residues. Ser124 carries the phosphoserine modification. The DH domain maps to 153–337 (KLLHIAQELL…STAADHSNAA (185 aa)). The PH 1 domain occupies 366 to 465 (ELIKEGSIQK…WIQVIQATVE (100 aa)). Residues 481–535 (CSQDEEPTLSPDQPVMSTSSVEPAGVADSNGGTPGIESRKSSSKTRRDKEKPGCK) are disordered. Over residues 517–533 (ESRKSSSKTRRDKEKPG) the composition is skewed to basic and acidic residues. The FYVE-type zinc finger occupies 528-584 (DKEKPGCKSCGETFNSITKRRYRCKLCGEVICRKCSEFKAENSKQSRVCRECFLEEP). Positions 534, 537, 551, 554, 559, 562, 576, and 579 each coordinate Zn(2+). Disordered regions lie at residues 586 to 612 (VPPS…DPRP) and 712 to 733 (GDTA…TDTP). Residues 612-711 (PSLLCGTLNL…WLKALGTAVH (100 aa)) enclose the PH 2 domain. The residue at position 732 (Thr732) is a Phosphothreonine.

As to expression, detected in adult brain, spleen, lung and skeletal muscle. Detected in embryos from 7 dpc to 17 dpc.

The protein localises to the cytoplasm. The protein resides in the cytoskeleton. Its function is as follows. Promotes the formation of filopodia. May activate CDC42, a member of the Ras-like family of Rho- and Rac proteins, by exchanging bound GDP for free GTP. Plays a role in regulating the actin cytoskeleton and cell shape. This chain is FYVE, RhoGEF and PH domain-containing protein 3 (Fgd3), found in Mus musculus (Mouse).